Here is a 679-residue protein sequence, read N- to C-terminus: Enzymatic polyprotein (679 aa).

Residues 40-130 (LHCFVDTGAS…LYEPFIQFTD (91 aa)) are protease. Asp45 is a catalytic residue. The region spanning 272–452 (LKVIKPSKSP…KKINFLGLEI (181 aa)) is the Reverse transcriptase domain.

Belongs to the caulimoviridae enzymatic polyprotein family.

It catalyses the reaction DNA(n) + a 2'-deoxyribonucleoside 5'-triphosphate = DNA(n+1) + diphosphate. Its function is as follows. Encodes for at least two polypeptides: protease (PR) and reverse transcriptase (RT). The protease processes the polyprotein in cis. Reverse transcriptase is multifunctional enzyme that converts the viral RNA genome into dsDNA in viral cytoplasmic capsids. This enzyme displays a DNA polymerase activity that can copy either DNA or RNA templates, and a ribonuclease H (RNase H) activity that cleaves the RNA strand of RNA-DNA heteroduplexes in a partially processive 3'- to 5'-endonucleasic mode. Neo-synthesized pregenomic RNA (pgRNA) are encapsidated, and reverse-transcribed inside the nucleocapsid. Partial (+)DNA is synthesized from the (-)DNA template and generates the relaxed circular DNA (RC-DNA) genome. After budding and infection, the RC-DNA migrates in the nucleus, and is converted into a plasmid-like covalently closed circular DNA (cccDNA). This Cauliflower mosaic virus (strain CM-1841) (CaMV) protein is Enzymatic polyprotein.